The sequence spans 772 residues: Polyribonucleotide nucleotidyltransferase (772 aa).

2 residues coordinate Mg(2+): Asp-488 and Asp-494. The 60-residue stretch at 555-614 (PRLTTLKINPEKIRDVIGKGGAVIRGLQEETGTTINIDEDGTITIASTDPEKAEFAKKRI) folds into the KH domain. One can recognise an S1 motif domain in the interval 624 to 692 (GKVYEGPVTK…EKGRVKLSMK (69 aa)). Residues 690 to 772 (SMKALTERPA…QPYAPRDSQE (83 aa)) form a disordered region. Over residues 703–740 (YSERPPREDRGDRGDRGGERRERSDRGDRGGDRGERAP) the composition is skewed to basic and acidic residues. Residues 743 to 757 (NSEQQQQPRSNEQQP) are compositionally biased toward low complexity.

The protein belongs to the polyribonucleotide nucleotidyltransferase family. Requires Mg(2+) as cofactor.

The protein localises to the cytoplasm. The enzyme catalyses RNA(n+1) + phosphate = RNA(n) + a ribonucleoside 5'-diphosphate. In terms of biological role, involved in mRNA degradation. Catalyzes the phosphorolysis of single-stranded polyribonucleotides processively in the 3'- to 5'-direction. This Variovorax paradoxus (strain S110) protein is Polyribonucleotide nucleotidyltransferase.